The sequence spans 230 residues: Uracil-DNA glycosylase (230 aa).

The Proton acceptor role is filled by Asp-70.

This sequence belongs to the uracil-DNA glycosylase (UDG) superfamily. UNG family.

Its subcellular location is the cytoplasm. It carries out the reaction Hydrolyzes single-stranded DNA or mismatched double-stranded DNA and polynucleotides, releasing free uracil.. Excises uracil residues from the DNA which can arise as a result of misincorporation of dUMP residues by DNA polymerase or due to deamination of cytosine. The sequence is that of Uracil-DNA glycosylase from Pseudomonas savastanoi pv. phaseolicola (strain 1448A / Race 6) (Pseudomonas syringae pv. phaseolicola (strain 1448A / Race 6)).